Consider the following 67-residue polypeptide: Small ribosomal subunit protein eS17 (67 aa).

Belongs to the eukaryotic ribosomal protein eS17 family. Part of the 30S ribosomal subunit.

The polypeptide is Small ribosomal subunit protein eS17 (Thermococcus kodakarensis (strain ATCC BAA-918 / JCM 12380 / KOD1) (Pyrococcus kodakaraensis (strain KOD1))).